Here is a 5206-residue protein sequence, read N- to C-terminus: MGKPFWRSVEYFFTGNYSADDGNNSIVAIGFGGEIHAYGGDDHVTVGSIGATVYTGSGNDTVVGGSAYLRVEDTTGHLSVKGAAGYADINKSGDGNVSFAGAAGGVSIDHLGNNGDVSYGGAAAYNGITRKGLSGNVTFKGAGGYNALWHETNQGNLSFAGAGAGNKLDRTWFNRYQGSRGDVTFDGAGAANSISSRVETGNITFRGAGADNHLVRKGKVGDITLQGAGASNRIERTRQAEDVYAQTRGNIRFEGVGGYNSLYSDVAHGDIHFSGGGAYNTITRKGSGSSFDAQGMEYAKAEDIVLTAAQMHGLSIDNGNKFHAVTAVKSEREPNTYLFAIADGTYTKINKVRLYNDPETGKLKYYSEAWFKRGNHLAELARSDVSSAGGFEVNPINGGYTLANIAVEHQQSVTVHAVEKNLTEYEWVTYANGTLIDAKDVALSEAKMGGHAISTDGTTVDVQAVKSNRKPNTYVYAKVLGPYTKIVVVELANDPKTGALKYQARSWYKEGDHTANLANEDISSANGYHSMGKGGYSLSDLHYSVNAVRSTSETVADIDEYTDQTLFKPATDSGESSGDVRFNGAGGGNVIKSNVTRGNVYFNGGGIANVILHSSQFGNTEFNGGGAANVIVKSGEEGDLTFRGAGLANVLVHQSKQGKMDVYAGGAVNVLVRIGDGQYLAHLLAYGNISVHKGNGNSRVVMLGGYNTHTQIGSGNGLWLAAGGFNVMTQVGKGDVASVLAGGANVLTKVGDGDLTAGMLGGANVITHISGDNETSNTTAVALGGANILTKKGKGNTLAVMGGGANVLTHVGDGTTTGVMVGGANILTKVGNGDTTGIMLGVGNVLTHVGDGQTLGVMGAAGNIFTKVGDGTSIAVMIGAGNIFTHVGEGNAWALMGGLGNVFTKVGNGDALALMVAEANVFTHIGDGMSVALMLAKGNVATKVGNGTTLAAMVGNANIFTHVGSGSTFAAMIGQANIMTKVGNDLTAALMVGKANIYTHVGDGTSLGIFAGEVNVMTKIGNGTTLAAMFGKANIMTHVGDGLTGVLALGEANIVTKVGDDFMGVVAAAKANVVTHVGDATTAAVLAGKGNILTKVGEGTTVGLLISDIGNVMTHVGDGTTIGIAKGKANIITKVGDGLGVNVAWGQANVFTQVGDGDRYNFAKGEANIITKVGDGKEVSVVQGKANIITHVGNGDDYTGAWGKANVITKVGNGRNVVLAKGEANIVTQVGDGDSFNALWSKGNIVTKVGDGMQVTAAKGKANITTTVGDGLSVTAAYGDANINTKVGDGVSVNVAWGKYNINTKVGDGLNVAVMKGKANANIHVGDGLNINASYAQNNVAIKVGNGDFYSLAVASSNTSSNKLSALFDNIKQTLLGVGGSQAINYLVQGDEASSSGTQKGRGAIATPEITKLDGFQMEAIEEVGSDLGDSLTGSVTKVDTPDLNKMQNALDVDGSSDQTQAPNLIVNGDFEQGDRGWKSTHGVEASYSGNVYGVNGEGHGARVTELDTYTNTSLYQDLTDLTEGEVIAVSFDFAKRAGLSNNEGIEVLWNGEVVFSSSGDASAWQQKTLKLTAHAGSNRIEFKGTGHNDGLGYILDNVVAKSESSQQANAVSEHATQNQASQNALSDKERAEADRQRLEQEKQKQLDAVAGSQSQLESTDQQALGNNGQAQRDAVKEESEAVTAELTKLAQGLDVLDGQATHTGESGDQWRNDFAGGLLDGVQSQLDDAKQLANDKIAAAKQTQSDNNSKVKESVAKSEAGVAQGEQNRAGAEQDIAEAKADAETRKADAVAKSNDAKQAESDAHSAANDAQSRGDRDAMNAENKANQAQNDAKGTKQNEGDRPDREGVAGSGLSGNAHSVEGAGETGSHITTDSQTNADGRFSEGLSEQEQEALEGATNAVNRLQINAGIRGKNSGSTITSMFTETNSDSIVVPTTASQDVVRKEIRISGVNLEGLGEASHDSAESLVAARAEKVANLYRWLDTDNDVATDKYVPVPGFERVDVDVSDEVKQRMIQSMSGYIEHTDNQVPKDQAEALATLFVESTLDYDWDKRVEFLTKLESYGYSFEAPHAEKSIVSFWSGKNFKQYRDILDNAQTDGKKVVYDIDVKGNAFAIDLNKHLMRWGGLFLDPDNAEQNQLKSSIDAATFSNTGFWSSVYATGAQNDVYVIAEGGVRLGNYFWNVELPALRQLQREGLVGEIRLLDKPVSEYKDLPADQIGRRLTDAGVAVKVRFDALSHERQAELLADNPDGYKADTLVELDVKLSAIDSMLRESLPFYSLRTERNLLVQEGEEGFEVRSWPGIDGKSKTILLDNPEDAAQQKSIERFILANFDNFEQMPDELFLVDNKVLSHHDGRTRIIAQKEDGAWTYNTNVELMSVTELLDAAHVNGKVRGDSYQQVIDALTEYHASTVEHADYELESVEKLLNLRKQIEGYVLGHPDSGRVEAMNSLLNQVNSRLEEVSVLAVSEQSIKAHDSFSRLYDQLDNANLKESKHLYLDGNGDFVTKGKGNLATIDQLGGSDAVLEKVKAAVTHEYGQVVADTIFARLSANDLAKDGKGIDIAGLNKVHQAIEQHMSPVSATMYIWKPSDHSTLGHAALQIGQGRTQLEGQAAADFNKQNYVSWWPLGSKSSNIRNIFNVATEDQPDLKLRWSDFSQPAHQNDTLEHDMASEENDGFGLKDGETKLKRFIEKLNAAKGIDASYKDASEGYASVLLGNPDMLASTGIPAHVFQPFVDQWNDTSYDMMDVANRFAEELQKQAQASGDPALVEKRIDNVVRLFAERALEEIEAFKASQADEGRVFRINLEGLDVAAMQAEWNRLSNDPDARYQLLTKNCSSTVAKVLKAGGADKLIGHTWRPKFGVWTPTELFNFGQALQEAQLEIAAKKQSHQVTDVLDALSGNEKHKENVTIENDGTPPRDKESLSPLTRFLNNELYGEKDARRKIGEITQTLLDHAVENGESQKVTLKGEAGRLTGYYHQGAASSEGETSATSGKVVLFLHGSGSSAEEQASAIRNHYQKQGIDMLAVNLRGYGESDGGPSEKGLYQDARTMFNYLVNDKGIDPSNIIIHGYSMGGPIAADLARYAAQNGQAVSGLLLDRPMPSMTKAITAHEMANPAGIVGAIAKAVNGQFSVEKNLKGLPKETPILLLTDNEGLGEEGEKLRAKLAIAGYNVTGEQTFYGHEASNRLMGQYADQIVSGLFNAEQAAVEAGEVLKGLEKDFKRYGDALKPDTSVPGKSKDIRTTKDFLNGYKNDHAKEIVDGFRSDMSIKQLVDLFVKGNWSAEQKGALAWEIESRALKVTFQNKSEKYNRLFREIASAGVVDAKATEQLAPQLMLLNLSNDGFGGRCDPLSKLVLVAKQLENDGQVGVARQLLEKMYSAAAVLSNPTLYSDSEKANASKLLSSLAAIHAKNPMHDTSMKVWQEKLEGKQALTVNGVVEKITDASANGKPVLLELDAPGHAMAAWAKDSGDDRVYGFYDPNAGIVEFSSAEKFGDYLTRFFGKSDLDMAQSYKLGKNDAGEAIFNRVVVMDGNTLASYKPTFGDKTTMQGILDLPVFDATPIKKPTGGVASDLEALGDKTKVVVDLAQIFTVQELKERAKVFAKPIGASYQGILDQLDLVHQAKGRDQIAASFELNKKINDYIAEHPTSGRNQALTQLKEQVTSALFIGKMQVAQAGIDAIAQTRPELAARIFMVAIEEANGKHVGLTDMMVRWANEDPYLAPKHGYKGETPSDLGFDAKYHVDLGEHYADFKQWLETSQSNGLLSKATLDESTKTVHLGYSYQELQDLTGAESVQMAFYFLKEAAKKADPISGDSAEMILLKKFADQSYLSQLDSDRMDQIEGIYRSSHETDIDAWDRRYSGTGYDELTNKLASATGVDEQLAVLLDDRKGLLIGEVHGSDVNGLRFVNEQMDALKKQGVTVIGLEHLRSDLAQPLIDRYLATGVMSSELSAMLKTKHLDVTLFENARANGIRIVALDANSSARPNVQGTEHGLMYRAGAANNIAVEVLQNLPDGEKFVAIYGKAHLQSHKGIEGFVPGITHRLDLPALKVSDSNQFTVEQDDVSLRVVYDDVANKPKITFKDSLSGANTALHNQNVNDWERVVVTPTADGGESRFDGQIIVQMENDDVVAKAAANLAGKHPESSVVVQIDSDGNYRVVYGDPSKLDGKLRWQLVGHGRDDSESNNTRLSGYSADELAVKLAKFQQSFNQAENINNKPDHISIVGCSLVSDDKQKGFGHQFINAMDANGLRVDVSVRSSELAVDEAGRKHTKDANGDWVQKAENNKVSLSWDEQGEVVAKDERIRNGIAEGDIDLSRIGVSDVDEPARGAIGDNNDVFDAPEKRKAETETSSSSANNKLSYSGNIQVNVGDGEFTAVNWGTSNVGIKVGTGGFKSLAFGDNNVMVHIGNGESKHSFDIGGYQALEGAQMFIGNRNVSFNLGRSNDLIVMMDKSIPTPPLVNPFDGAARISGVLQSIATSGEGQDWLAAQEQQWTLSGAKKFVKDMSGLDQSSSVDYTSLVELDSQNERSSRGLKHDAEAALNKQYNQWLSGNSDSDTSKLSRADKLRQANEKLAFNFAVGGQGADIQVTTGNWNFMFGDNIQSILDTNLGSLFGLMTQQFSATGQAKTTFTYTPEDLPRQLKNKLLGQLAGVGAETTLADIFGVDYTASGQIVSRNGEAVDGVAILKEMLEVIGEFSGDQLQAFVDPAKLLDSLKSGINMGADGIKSFAETHGLKEKAPEEEEDNSSVSVNGASVNSAQGATVADGSTETAETPDRAFGFNSLNLPNLFATIFSQDKQKEMKSLVENLKENLTADLLNMKEKTFDFLRNSGHLQGDGDINISLGNYNFNWGGDGKDLGAYLGDNNNFWGGRGDDVFYATGTSNIFTGGEGNDMGVLMGRENMMFGGDGNDTAVVAGRINHVFLGAGDDQSFVFGEGGEIDTGSGRDYVVTSGNFNRVDTGDDQDYSVTIGNNNQVELGAGNDFANVFGNYNRINASAGNDVVKLMGYHAVLNGGEGEDHLIAAAISKFSQFNGGEGRDLMVLGGYQNTFKGGTDVDSFVVSGDVIDNLVEDIRSEDNIVFNGIDWQKLWFERSGYDLKLSILRDPASDSDQAKFEHIGSVTFSDYFNGNRAQVIIAMGEKDATGEREYTTLSESAIDALVQAMSGFDPQAGDNGFMDNLDSKSRVAITTAWADVVHKKGITV.

The first 19 residues, 1 to 19, serve as a signal peptide directing secretion; the sequence is MGKPFWRSVEYFFTGNYSA. 39 RtxA repeats span residues 101 to 118, 121 to 138, 141 to 157, 161 to 184, 187 to 204, 207 to 224, 255 to 272, 275 to 291, 584 to 601, 604 to 620, 624 to 641, 644 to 658, 741 to 753, 759 to 771, 782 to 798, 801 to 816, 820 to 835, 841 to 855, 858 to 875, 877 to 891, 896 to 910, 915 to 932, 934 to 950, 972 to 984, 991 to 1006, 1031 to 1043, 1067 to 1079, 1087 to 1102, 1110 to 1122, 1125 to 1142, 1145 to 1159, 1163 to 1179, 1184 to 1199, 1201 to 1217, 1220 to 1236, 1242 to 1256, 1258 to 1275, 1296 to 1313, and 1315 to 1332; these read GAAGGVSIDHLGNNGDVS, GAAAYNGITRKGLSGNVT, GAGGYNALWHETNQGNL, GAGAGNKLDRTWFNRYQGSRGDVT, GAGAANSISSRVETGNIT, GAGADNHLVRKGKVGDIT, GVGGYNSLYSDVAHGDIH, GGGAYNTITRKGSGSSF, GAGGGNVIKSNVTRGNVY, GGGIANVILHSSQFGNT, GGGAANVIVKSGEEGDLT, GAGLANVLVHQSKQG, AGGANVLTKVGDG, MLGGANVITHISG, ALGGANILTKKGKGNTL, MGGGANVLTHVGDGTT, MVGGANILTKVGNGDT, GVGNVLTHVGDGQTL, MGAAGNIFTKVGDGTSIA, MIGAGNIFTHVGEGN, MGGLGNVFTKVGNGD, MVAEANVFTHIGDGMSVA, MLAKGNVATKVGNGTTL, MIGQANIMTKVGN, MVGKANIYTHVGDGTS, GKANIMTHVGDGL, AAAKANVVTHVGD, AGKGNILTKVGEGTTV, GNVMTHVGDGTTI, AKGKANIITKVGDGLGVN, WGQANVFTQVGDGDR, AKGEANIITKVGDGKEV, GKANIITHVGNGDDYT, AWGKANVITKVGNGRNV, AKGEANIVTQVGDGDSF, KGNIVTKVGDGMQVT, AKGKANITTTVGDGLSVT, AWGKYNINTKVGDGLNVA, and MKGKANANIHVGDGLNIN. The span at 1606–1626 shows a compositional bias: polar residues; it reads SQQANAVSEHATQNQASQNAL. 2 disordered regions span residues 1606–1682 and 1738–1895; these read SQQA…ESEA and IAAA…EQEA. The segment covering 1627–1646 has biased composition (basic and acidic residues); it reads SDKERAEADRQRLEQEKQKQ. Over residues 1652–1671 the composition is skewed to polar residues; sequence GSQSQLESTDQQALGNNGQA. A compositionally biased stretch (basic and acidic residues) spans 1778–1805; the sequence is AEAKADAETRKADAVAKSNDAKQAESDA. The segment covering 1825-1834 has biased composition (polar residues); sequence NKANQAQNDA. Basic and acidic residues predominate over residues 1835-1849; sequence KGTKQNEGDRPDREG. A compositionally biased stretch (polar residues) spans 1870-1880; that stretch reads SHITTDSQTNA. The segment at 2377-2461 is membrane localization region (MLD); it reads ELMSVTELLD…SLLNQVNSRL (85 aa). The rho inactivation domain (RID) stretch occupies residues 2537 to 2901; it reads EYGQVVADTI…HQVTDVLDAL (365 aa). Positions 2998 to 3113 are ABH effector region; that stretch reads VVLFLHGSGS…MPSMTKAITA (116 aa). In terms of domain architecture, Peptidase C80 spans 4111–4295; it reads PTADGGESRF…AENNKVSLSW (185 aa). 1D-myo-inositol hexakisphosphate contacts are provided by residues 4117 to 4119, 4144 to 4145, and Arg-4175; these read ESR and KH. The active-site For cysteine protease activity is the His-4181. 1D-myo-inositol hexakisphosphate is bound at residue Ser-4226. Cys-4230 acts as the Nucleophile; for cysteine protease activity in catalysis. 1D-myo-inositol hexakisphosphate-binding positions include 4259–4261, 4272–4273, Lys-4285, and Lys-4290; these read SVR and RK. Disordered stretches follow at residues 4333-4362 and 4738-4779; these read GAIGDNNDVFDAPEKRKAETETSSSSANNK and LKEK…ETPD. Over residues 4750 to 4762 the composition is skewed to low complexity; it reads SSVSVNGASVNSA.

The cofactor is Mg(2+).

It localises to the secreted. The protein resides in the host cytoplasm. The protein localises to the host cytosol. It is found in the host cell membrane. The enzyme catalyses L-lysyl-/S-(2E,6E,10E)-geranylgeranyl-L-cysteinyl-[protein] + hexadecanoyl-CoA = N(6)-hexadecanoyl-L-lysyl-/S-(2E,6E,10E)-geranylgeranyl-L-cysteinyl-[protein] + CoA + H(+). It carries out the reaction L-lysyl-/S-(2E,6E,10E)-geranylgeranyl-L-cysteinyl-[protein] + dodecanoyl-CoA = N(6)-dodecanoyl-L-lysyl-/S-(2E,6E,10E)-geranylgeranyl-L-cysteinyl-[protein] + CoA + H(+). It catalyses the reaction L-lysyl-/S-(2E,6E,10E)-geranylgeranyl-L-cysteinyl-[protein] + decanoyl-CoA = N(6)-decanoyl-L-lysyl-/S-(2E,6E,10E)-geranylgeranyl-L-cysteinyl-[protein] + CoA + H(+). Precursor of a multifunctional toxin that causes destruction of the actin cytoskeleton by covalent cross-linking of actin and inactivation of Rho GTPases when translocated into the host cytoplasm. Upon translocation into the host cell, undergoes autoprocessing in cis mediated by the peptidase C80 domain (also named CPD domain): the protease activity is activated upon binding inositol hexakisphosphate (InsP6) present at the host cell membrane and delivers the Cysteine protease domain-containing toxin F3 chain to the host cytosol. The Cysteine protease domain-containing toxin F3 chain will then further cleave and release effector toxin chains that cause disassembly of the actin cytoskeleton and enhance V.vulnificus colonization of the small intestine, possibly by facilitating evasion of phagocytic cells. In terms of biological role, following autocatalytic cleavage in cis, this chain mediates processing in trans to release other individual toxin chains to the host cytosol. Released effector toxin chains cause disassembly of the actin cytoskeleton and enhance V.vulnificus colonization of the small intestine, possibly by facilitating evasion of phagocytic cells. Its function is as follows. Actin-directed toxin that catalyzes the covalent cross-linking of host cytoplasmic monomeric actin. Mediates the cross-link between 'Lys-50' of one monomer and 'Glu-270' of another actin monomer, resulting in formation of highly toxic actin oligomers that cause cell rounding. The toxin can be highly efficient at very low concentrations by acting on formin homology family proteins: toxic actin oligomers bind with high affinity to formins and adversely affect both nucleation and elongation abilities of formins, causing their potent inhibition in both profilin-dependent and independent manners. Acts as an acid--amino-acid ligase that transfers the gamma-phosphoryl group of ATP to the 'Glu-270' actin residue, resulting in the formation of an activated acyl phosphate intermediate. This intermediate is further hydrolyzed and the energy of hydrolysis is utilized for the formation of the amide bond between actin subunits. Functionally, N-epsilon-fatty acyltransferase that mediates lysine-palmitoylation of host Rho GTPase proteins, with a strong preference for host Rac1. After delivery to the host cytosol, localizes to the host cell membrane where it palmitoylates host Rho GTPase proteins, resulting in loss of all active GTP-bound Rho and subsequent actin depolymerization. Prenylation of host Rac1 at the C-terminus is required for lysine-palmitoylation. Indirectly activates the small GTPase CDC42. This is Multifunctional-autoprocessing repeats-in-toxin from Vibrio vulnificus.